A 555-amino-acid chain; its full sequence is CTP synthase (555 aa).

The interval 1–272 is amidoligase domain; sequence MQPTSTTTKH…DAYVVRKLDL (272 aa). Residue S19 participates in CTP binding. S19 is a UTP binding site. ATP-binding positions include 20–25 and D77; that span reads SLGKGL. The Mg(2+) site is built by D77 and E146. CTP-binding positions include 153–155, 193–198, and K229; these read DIE and KTKPTQ. UTP-binding positions include 193–198 and K229; that span reads KTKPTQ. One can recognise a Glutamine amidotransferase type-1 domain in the interval 297 to 548; it reads TVALVGKYID…VKAAVARQVA (252 aa). Residue G360 participates in L-glutamine binding. C387 acts as the Nucleophile; for glutamine hydrolysis in catalysis. Residues 388-391, E411, and R473 each bind L-glutamine; that span reads LGLQ. Residues H521 and E523 contribute to the active site.

This sequence belongs to the CTP synthase family. Homotetramer.

The catalysed reaction is UTP + L-glutamine + ATP + H2O = CTP + L-glutamate + ADP + phosphate + 2 H(+). The enzyme catalyses L-glutamine + H2O = L-glutamate + NH4(+). It carries out the reaction UTP + NH4(+) + ATP = CTP + ADP + phosphate + 2 H(+). It functions in the pathway pyrimidine metabolism; CTP biosynthesis via de novo pathway; CTP from UDP: step 2/2. Allosterically activated by GTP, when glutamine is the substrate; GTP has no effect on the reaction when ammonia is the substrate. The allosteric effector GTP functions by stabilizing the protein conformation that binds the tetrahedral intermediate(s) formed during glutamine hydrolysis. Inhibited by the product CTP, via allosteric rather than competitive inhibition. In terms of biological role, catalyzes the ATP-dependent amination of UTP to CTP with either L-glutamine or ammonia as the source of nitrogen. Regulates intracellular CTP levels through interactions with the four ribonucleotide triphosphates. This Streptomyces griseus subsp. griseus (strain JCM 4626 / CBS 651.72 / NBRC 13350 / KCC S-0626 / ISP 5235) protein is CTP synthase.